We begin with the raw amino-acid sequence, 237 residues long: MSEELMKQLSNYKAQLQQVEAALSIDPDNEDLLKLQKDLQEVIELTKDLLTSQPAEGTTSTKSSETVAPSHSWRVGDHCMATWSQDGQVYEAEIEEIDNENGTAAITFAGYGNAEVMPLHMLKKVEEGRIRDEIDGKPKSKKELQAEQREYKKKKAQKKVQRMKELEQEREDQKSKWQQFNNKAYSKNKKGQVKRSIFASPESVNGKVGVGTCGIADKPMTQYNDTSKYNVRHLMPQ.

The segment covering 52–69 (SQPAEGTTSTKSSETVAP) has biased composition (polar residues). Disordered stretches follow at residues 52–73 (SQPA…SHSW) and 149–198 (REYK…RSIF). A Tudor domain is found at 72–132 (SWRVGDHCMA…KKVEEGRIRD (61 aa)). The short motif at 142 to 160 (KELQAEQREYKKKKAQKKV) is the Nuclear localization signal element. Residues 151–161 (YKKKKAQKKVQ) are compositionally biased toward basic residues. The segment covering 162-175 (RMKELEQEREDQKS) has biased composition (basic and acidic residues). The span at 176–185 (KWQQFNNKAY) shows a compositional bias: polar residues.

It belongs to the SMN family. Associates with spliceosomes.

The protein localises to the nucleus speckle. It is found in the nucleus. Its subcellular location is the cajal body. Involved in spliceosome assembly. The sequence is that of Survival of motor neuron-related-splicing factor 30 (smndc1) from Danio rerio (Zebrafish).